Consider the following 309-residue polypeptide: Ribosomal protein L11 methyltransferase (309 aa).

The S-adenosyl-L-methionine site is built by T160, G181, D203, and N245.

This sequence belongs to the methyltransferase superfamily. PrmA family.

Its subcellular location is the cytoplasm. It carries out the reaction L-lysyl-[protein] + 3 S-adenosyl-L-methionine = N(6),N(6),N(6)-trimethyl-L-lysyl-[protein] + 3 S-adenosyl-L-homocysteine + 3 H(+). In terms of biological role, methylates ribosomal protein L11. This is Ribosomal protein L11 methyltransferase from Caldanaerobacter subterraneus subsp. tengcongensis (strain DSM 15242 / JCM 11007 / NBRC 100824 / MB4) (Thermoanaerobacter tengcongensis).